Here is a 426-residue protein sequence, read N- to C-terminus: Casein kinase I (426 aa).

The region spanning 9 to 278 (YRISRKIGGG…LRKLLREMFV (270 aa)) is the Protein kinase domain. ATP-binding positions include 15–23 (IGGGSFGEI) and K38. D128 serves as the catalytic Proton acceptor. Disordered regions lie at residues 340–360 (TTTT…TVSN) and 377–426 (PSYN…PPAK). A compositionally biased stretch (polar residues) spans 345 to 360 (SSSQPSNVKNISTVSN). Residues 386 to 404 (QSPQQTTTTTSSSNPNQTT) are compositionally biased toward low complexity. Positions 414–426 (PQSSSTTTKPPAK) are enriched in polar residues.

The protein belongs to the protein kinase superfamily. CK1 Ser/Thr protein kinase family. Casein kinase I subfamily. As to quaternary structure, monomer. Post-translationally, autophosphorylated.

It is found in the cytoplasm. The protein resides in the nucleus. The enzyme catalyses L-seryl-[protein] + ATP = O-phospho-L-seryl-[protein] + ADP + H(+). The catalysed reaction is L-threonyl-[protein] + ATP = O-phospho-L-threonyl-[protein] + ADP + H(+). Its function is as follows. Casein kinases are operationally defined by their preferential utilization of acidic proteins such as caseins as substrates. Can phosphorylate a large number of proteins. May have a role in DNA repair mechanism and support vegetative growth of the cells. The chain is Casein kinase I (cak1-1) from Dictyostelium discoideum (Social amoeba).